Here is a 112-residue protein sequence, read N- to C-terminus: Ferredoxin-2 (112 aa).

4Fe-4S ferredoxin-type domains are found at residues 2–30 and 31–60; these read TYVVTDNCIACKYTDCVEVCPVDCFYEGE and NTLVIHPDECIDCGVCEPECPADAIRPDTE. [3Fe-4S] cluster-binding residues include Cys9 and Cys17. [4Fe-4S] cluster is bound by residues Cys21, Cys40, Cys43, and Cys46. [3Fe-4S] cluster is bound at residue Cys50. The segment covering 85-103 has biased composition (basic and acidic residues); it reads DPMPDHKKYDGETGKREKY. The segment at 85–112 is disordered; it reads DPMPDHKKYDGETGKREKYFSPNPGTGD.

It depends on [4Fe-4S] cluster as a cofactor. [3Fe-4S] cluster is required as a cofactor.

In terms of biological role, ferredoxins are iron-sulfur proteins that transfer electrons in a wide variety of metabolic reactions. The chain is Ferredoxin-2 (fdxA) from Rhodobacter capsulatus (strain ATCC BAA-309 / NBRC 16581 / SB1003).